The following is a 137-amino-acid chain: Basic phospholipase A2 homolog Ts-R6 (137 aa).

A signal peptide spans 1–16; sequence MRTLWIMAVLLLGVEG. 7 disulfide bridges follow: C42–C130, C44–C60, C59–C110, C65–C137, C66–C103, C73–C97, and C91–C101.

As to expression, expressed by the venom gland.

Its subcellular location is the secreted. Functionally, snake venom phospholipase A2 homolog that induces local edema a few hours after injection (5-10 ug) in the hind paw and shows weak anticoagulant and myotoxic activities. The chain is Basic phospholipase A2 homolog Ts-R6 from Trimeresurus stejnegeri (Chinese green tree viper).